Reading from the N-terminus, the 416-residue chain is Pre-mRNA-splicing factor slu-7 (416 aa).

Residues 1–34 form a disordered region; that stretch reads MPPPPPNRREQATAAPSSTDKSETGAGAARKEDN. Residues 95 to 112 form a CCHC-type zinc finger; the sequence is GACENCGAMGHKKKDCLE. 2 stretches are compositionally biased toward basic and acidic residues: residues 168–179 and 188–213; these read RRALQGDQKTPD and DDKS…QSMR. Residues 168-213 form a disordered region; sequence RRALQGDQKTPDGEGADGPEDDKSGFKYDEESDMGRDRATTKQSMR.

It belongs to the SLU7 family. Associated with the spliceosome.

It localises to the nucleus. In terms of biological role, involved in pre-mRNA splicing. In Neurospora crassa (strain ATCC 24698 / 74-OR23-1A / CBS 708.71 / DSM 1257 / FGSC 987), this protein is Pre-mRNA-splicing factor slu-7 (slu-7).